Here is a 255-residue protein sequence, read N- to C-terminus: ATP synthase subunit a (255 aa).

A run of 6 helical transmembrane segments spans residues 28-48 (VDSL…FWLG), 86-106 (IAPL…MDLV), 125-145 (ILPT…FFLI), 164-184 (FHPF…IELI), 203-223 (LIFI…GTPW), and 224-244 (AIFH…LTVV).

This sequence belongs to the ATPase A chain family. F-type ATPases have 2 components, CF(1) - the catalytic core - and CF(0) - the membrane proton channel. CF(1) has five subunits: alpha(3), beta(3), gamma(1), delta(1), epsilon(1). CF(0) has three main subunits: a(1), b(2) and c(9-12). The alpha and beta chains form an alternating ring which encloses part of the gamma chain. CF(1) is attached to CF(0) by a central stalk formed by the gamma and epsilon chains, while a peripheral stalk is formed by the delta and b chains.

The protein localises to the cell inner membrane. Its function is as follows. Key component of the proton channel; it plays a direct role in the translocation of protons across the membrane. This chain is ATP synthase subunit a, found in Alkalilimnicola ehrlichii (strain ATCC BAA-1101 / DSM 17681 / MLHE-1).